The following is a 1138-amino-acid chain: Transmembrane channel-like protein 3 (1138 aa).

Positions M1–A15 are enriched in low complexity. Disordered regions lie at residues M1–K20 and N29–D54. The Cytoplasmic portion of the chain corresponds to M1–W155. The chain crosses the membrane as a helical span at residues L156–L176. At L177–D202 the chain is on the extracellular side. A helical membrane pass occupies residues T203–S223. Over D224–R233 the chain is Cytoplasmic. A helical transmembrane segment spans residues L234–L254. The Extracellular segment spans residues K255 to R327. The N-linked (GlcNAc...) asparagine glycan is linked to N272. A helical membrane pass occupies residues I328 to V348. Over V349–E369 the chain is Cytoplasmic. The helical transmembrane segment at V370–A390 threads the bilayer. At L391 to R401 the chain is on the extracellular side. A helical transmembrane segment spans residues F402–L422. The Cytoplasmic portion of the chain corresponds to L423–M508. Residues L509–F529 form a helical membrane-spanning segment. Residues R530 to G569 lie on the Extracellular side of the membrane. Residues M570–I590 form a helical membrane-spanning segment. The Cytoplasmic segment spans residues G591–N618. A helical transmembrane segment spans residues F619–I639. Over A640–V676 the chain is Extracellular. A helical membrane pass occupies residues I677–I697. The Cytoplasmic segment spans residues Y698–V1138. Over residues N753–D763 the composition is skewed to polar residues. Disordered regions lie at residues N753 to S859, S973 to P1005, and P1065 to D1095. The segment covering G764 to G773 has biased composition (basic and acidic residues). 2 stretches are compositionally biased toward polar residues: residues S777–N795 and T804–V813. Residues T828 to A845 show a composition bias toward low complexity. Residues H989–R998 are compositionally biased toward basic residues. Low complexity predominate over residues S1074 to D1095.

Belongs to the TMC family. As to expression, expressed in a range of tissues including cerebrum, cerebellum, retina, cochlea, lung, liver and heart. Also expressed in the apical, medial and basal portions of the basillar papilla.

The protein localises to the membrane. Functionally, probable component of an ion channel. The chain is Transmembrane channel-like protein 3 from Gallus gallus (Chicken).